Reading from the N-terminus, the 106-residue chain is uncharacterized protein (106 aa).

The signal sequence occupies residues 1 to 27; it reads MHHFVPSISLFMASVSFSVFFSHLATS. The chain crosses the membrane as a helical span at residues 42–62; it reads TLFSMVPLINSSFNLSVFLFF.

Its subcellular location is the membrane. This is an uncharacterized protein from Saccharomyces cerevisiae (strain ATCC 204508 / S288c) (Baker's yeast).